The sequence spans 312 residues: Putative electron transfer flavoprotein subunit YdiR (312 aa).

FAD is bound at residue 254-282 (LYLTLGISGQIQHMVGGNGAKVIVAINKD).

This sequence belongs to the ETF alpha-subunit/FixB family. As to quaternary structure, ydiR and YdiQ form a heterodimer.

Functionally, may play a role in a redox process. The chain is Putative electron transfer flavoprotein subunit YdiR (ydiR) from Escherichia coli (strain K12).